The chain runs to 226 residues: RING-H2 finger protein ATL75 (226 aa).

Residues 60 to 80 (LMLLSVLICGIICCLGLHYII) form a helical membrane-spanning segment. The RING-type; atypical zinc-finger motif lies at 136-178 (CVICLSDFVSGEQIRMLPKCHHGFHVRCIDKWLQQHLTCPKCR).

This sequence belongs to the RING-type zinc finger family. ATL subfamily.

The protein resides in the membrane. It catalyses the reaction S-ubiquitinyl-[E2 ubiquitin-conjugating enzyme]-L-cysteine + [acceptor protein]-L-lysine = [E2 ubiquitin-conjugating enzyme]-L-cysteine + N(6)-ubiquitinyl-[acceptor protein]-L-lysine.. It functions in the pathway protein modification; protein ubiquitination. The polypeptide is RING-H2 finger protein ATL75 (ATL75) (Arabidopsis thaliana (Mouse-ear cress)).